The primary structure comprises 473 residues: Ribulose bisphosphate carboxylase large chain (473 aa).

Residues asparagine 116 and threonine 166 each coordinate substrate. Lysine 168 functions as the Proton acceptor in the catalytic mechanism. A substrate-binding site is contributed by lysine 170. 3 residues coordinate Mg(2+): lysine 194, aspartate 196, and glutamate 197. Lysine 194 is subject to N6-carboxylysine. The active-site Proton acceptor is histidine 287. Substrate is bound by residues arginine 288, histidine 320, and serine 372.

Belongs to the RuBisCO large chain family. Type I subfamily. Heterohexadecamer of 8 large chains and 8 small chains. It depends on Mg(2+) as a cofactor.

The enzyme catalyses 2 (2R)-3-phosphoglycerate + 2 H(+) = D-ribulose 1,5-bisphosphate + CO2 + H2O. It carries out the reaction D-ribulose 1,5-bisphosphate + O2 = 2-phosphoglycolate + (2R)-3-phosphoglycerate + 2 H(+). Functionally, ruBisCO catalyzes two reactions: the carboxylation of D-ribulose 1,5-bisphosphate, the primary event in carbon dioxide fixation, as well as the oxidative fragmentation of the pentose substrate. Both reactions occur simultaneously and in competition at the same active site. This is Ribulose bisphosphate carboxylase large chain from Alkalilimnicola ehrlichii (strain ATCC BAA-1101 / DSM 17681 / MLHE-1).